A 380-amino-acid polypeptide reads, in one-letter code: tRNA-specific 2-thiouridylase MnmA (380 aa).

Residues 10-17 (AMSGGVDS) and Leu-36 contribute to the ATP site. The Nucleophile role is filled by Cys-106. A disulfide bridge links Cys-106 with Cys-202. Position 130 (Gly-130) interacts with ATP. Residues 152-154 (KNQ) form an interaction with tRNA region. Cys-202 serves as the catalytic Cysteine persulfide intermediate. Positions 308 to 309 (RY) are interaction with tRNA.

It belongs to the MnmA/TRMU family.

The protein resides in the cytoplasm. The enzyme catalyses S-sulfanyl-L-cysteinyl-[protein] + uridine(34) in tRNA + AH2 + ATP = 2-thiouridine(34) in tRNA + L-cysteinyl-[protein] + A + AMP + diphosphate + H(+). Its function is as follows. Catalyzes the 2-thiolation of uridine at the wobble position (U34) of tRNA, leading to the formation of s(2)U34. This Leptospira biflexa serovar Patoc (strain Patoc 1 / Ames) protein is tRNA-specific 2-thiouridylase MnmA.